The chain runs to 259 residues: MVPIAAIRRKLMDGSISHNELDELKKDQRKGVQELLKRYQAQQEKQQTLIQMHKQMWRYEQELKQRGYVAVCGVDEVGRGPLAGPVTACACILPDDFQLLGLTDSKKLSKAKREEYAKMISEQAVAYSIASVSAAEIDEINILQATKKAMTKAINGLSQKTDHLLLDAVRLDVPIAQTSLIKGDAKSLSIAASSVLAKVWRDRYMEELAQTYPGYGFDTHAGYGTASHLQALRTYGMTPEHRKSFRPVLEESQGLIYGT.

The region spanning 69–257 (VAVCGVDEVG…VLEESQGLIY (189 aa)) is the RNase H type-2 domain. Positions 75, 76, and 167 each coordinate a divalent metal cation.

Belongs to the RNase HII family. The cofactor is Mn(2+). Mg(2+) is required as a cofactor.

The protein resides in the cytoplasm. It carries out the reaction Endonucleolytic cleavage to 5'-phosphomonoester.. Functionally, endonuclease that specifically degrades the RNA of RNA-DNA hybrids. The chain is Ribonuclease HII from Shouchella clausii (strain KSM-K16) (Alkalihalobacillus clausii).